A 262-amino-acid polypeptide reads, in one-letter code: Nickel import ATP-binding protein NikD (262 aa).

Positions 6–249 (LAIEGLTATT…PGHEVTRMLV (244 aa)) constitute an ABC transporter domain. An ATP-binding site is contributed by 42-49 (GASGSGKS).

The protein belongs to the ABC transporter superfamily. Nickel importer (TC 3.A.1.5.3) family. As to quaternary structure, the complex is composed of two ATP-binding proteins (NikD and NikE), two transmembrane proteins (NikB and NikC) and a solute-binding protein (NikA).

The protein resides in the cell inner membrane. The catalysed reaction is Ni(2+)(out) + ATP + H2O = Ni(2+)(in) + ADP + phosphate + H(+). Functionally, part of the ABC transporter complex NikABCDE involved in nickel import. Responsible for energy coupling to the transport system. This Brucella suis biovar 1 (strain 1330) protein is Nickel import ATP-binding protein NikD.